The primary structure comprises 330 residues: Ketol-acid reductoisomerase (NADP(+)) (330 aa).

The KARI N-terminal Rossmann domain maps to 3–184 (LSVYYDKDID…GGGRMGVLET (182 aa)). Residues 26–29 (YGTQ), Ser52, and Ser54 each bind NADP(+). His109 is an active-site residue. Gly135 provides a ligand contact to NADP(+). The 145-residue stretch at 185–329 (SFKEECESDL…EILRTPFNHE (145 aa)) folds into the KARI C-terminal knotted domain. Mg(2+) contacts are provided by Asp193, Glu197, Glu229, and Glu233. Ser254 provides a ligand contact to substrate.

This sequence belongs to the ketol-acid reductoisomerase family. Requires Mg(2+) as cofactor.

The catalysed reaction is (2R)-2,3-dihydroxy-3-methylbutanoate + NADP(+) = (2S)-2-acetolactate + NADPH + H(+). It carries out the reaction (2R,3R)-2,3-dihydroxy-3-methylpentanoate + NADP(+) = (S)-2-ethyl-2-hydroxy-3-oxobutanoate + NADPH + H(+). The protein operates within amino-acid biosynthesis; L-isoleucine biosynthesis; L-isoleucine from 2-oxobutanoate: step 2/4. Its pathway is amino-acid biosynthesis; L-valine biosynthesis; L-valine from pyruvate: step 2/4. Functionally, involved in the biosynthesis of branched-chain amino acids (BCAA). Catalyzes an alkyl-migration followed by a ketol-acid reduction of (S)-2-acetolactate (S2AL) to yield (R)-2,3-dihydroxy-isovalerate. In the isomerase reaction, S2AL is rearranged via a Mg-dependent methyl migration to produce 3-hydroxy-3-methyl-2-ketobutyrate (HMKB). In the reductase reaction, this 2-ketoacid undergoes a metal-dependent reduction by NADPH to yield (R)-2,3-dihydroxy-isovalerate. The protein is Ketol-acid reductoisomerase (NADP(+)) of Helicobacter acinonychis (strain Sheeba).